Reading from the N-terminus, the 143-residue chain is Anti-sigma F factor (143 aa).

This sequence belongs to the anti-sigma-factor family.

It catalyses the reaction L-seryl-[protein] + ATP = O-phospho-L-seryl-[protein] + ADP + H(+). The catalysed reaction is L-threonyl-[protein] + ATP = O-phospho-L-threonyl-[protein] + ADP + H(+). Binds to sigma F and blocks its ability to form an RNA polymerase holoenzyme (E-sigma F). Phosphorylates SpoIIAA on a serine residue. This phosphorylation may enable SpoIIAA to act as an anti-anti-sigma factor that counteracts SpoIIAB and thus releases sigma F from inhibition. This Clostridium novyi (strain NT) protein is Anti-sigma F factor.